The following is a 466-amino-acid chain: MAKTLYEKVWDSHIVAAPEGEAPLIYVDRHLVHEVTSPQAFSGLKVAGRKLRAPEKTFATMDHNTSTKSASLDALSPMARTQVETLAQNCKEFGVRLYDIHHKNQGIVHVMGPELGITLPGTVIVCGDSHTATHGAFGALAFGIGTSEVEHVMATQTLRQLKAKTMKIEVRGLVADGITAKDIVLAIIGKIGMDGGTGYVVEFCGEAIAALSMEGRMTVCNMAIEMGAKAGMIAPDQTTIDYLEGREFAPKGEAWQQAVAAWKALKSDEDAMFDAHVVLEASDIAPQLTWGTNPGQVVAIDQCVPNPEDETNPTVKASIEKALDYVALTPGTQMTDVSINKVFIGSCTNSRIEDLRSAAQQAKGRKVAAGVTAIVVPGSGLVKEQAEAEGLDKIFIDAGFEWRLPGCSMCLAMNDDRLEAGDRCASTSNRNFEGRQGRGSRTHLVSPAMAAAAAIAGHFVDIRKPY.

[4Fe-4S] cluster is bound by residues cysteine 347, cysteine 407, and cysteine 410.

It belongs to the aconitase/IPM isomerase family. LeuC type 1 subfamily. In terms of assembly, heterodimer of LeuC and LeuD. The cofactor is [4Fe-4S] cluster.

The catalysed reaction is (2R,3S)-3-isopropylmalate = (2S)-2-isopropylmalate. Its pathway is amino-acid biosynthesis; L-leucine biosynthesis; L-leucine from 3-methyl-2-oxobutanoate: step 2/4. In terms of biological role, catalyzes the isomerization between 2-isopropylmalate and 3-isopropylmalate, via the formation of 2-isopropylmaleate. The polypeptide is 3-isopropylmalate dehydratase large subunit (Shewanella loihica (strain ATCC BAA-1088 / PV-4)).